A 227-amino-acid chain; its full sequence is MAYPFQLGLQDATSPIMEELLHFHDHTLMIVFLISSLVLYIISLMLTTKLTHTSTMDAQEVETVWTILPAIILISIALPSLRILYMMDEINNPSLTVKTMGHQWYWSYEYTDYEDLNFDSYMIPTQELKPGELRLLEVDNRVVLPMEMTIRMLVSSEDVLHSWAVPSLGLKTDAIPGRLNQTTLMATRPGLYYGQCSEICGSNHSFMPIVLEMVPLPYFEAWSTLMM.

Residues 1–14 (MAYPFQLGLQDATS) lie on the Mitochondrial intermembrane side of the membrane. Residues 15–45 (PIMEELLHFHDHTLMIVFLISSLVLYIISLM) form a helical membrane-spanning segment. Over 46–59 (LTTKLTHTSTMDAQ) the chain is Mitochondrial matrix. The chain crosses the membrane as a helical span at residues 60-87 (EVETVWTILPAIILISIALPSLRILYMM). Residues 88–227 (DEINNPSLTV…YFEAWSTLMM (140 aa)) are Mitochondrial intermembrane-facing. Cu cation contacts are provided by H161, C196, E198, C200, H204, and M207. E198 contributes to the Mg(2+) binding site. At Y218 the chain carries Phosphotyrosine.

Belongs to the cytochrome c oxidase subunit 2 family. As to quaternary structure, component of the cytochrome c oxidase (complex IV, CIV), a multisubunit enzyme composed of 14 subunits. The complex is composed of a catalytic core of 3 subunits MT-CO1, MT-CO2 and MT-CO3, encoded in the mitochondrial DNA, and 11 supernumerary subunits COX4I, COX5A, COX5B, COX6A, COX6B, COX6C, COX7A, COX7B, COX7C, COX8 and NDUFA4, which are encoded in the nuclear genome. The complex exists as a monomer or a dimer and forms supercomplexes (SCs) in the inner mitochondrial membrane with NADH-ubiquinone oxidoreductase (complex I, CI) and ubiquinol-cytochrome c oxidoreductase (cytochrome b-c1 complex, complex III, CIII), resulting in different assemblies (supercomplex SCI(1)III(2)IV(1) and megacomplex MCI(2)III(2)IV(2)). Found in a complex with TMEM177, COA6, COX18, COX20, SCO1 and SCO2. Interacts with TMEM177 in a COX20-dependent manner. Interacts with COX20. Interacts with COX16. It depends on Cu cation as a cofactor.

Its subcellular location is the mitochondrion inner membrane. It carries out the reaction 4 Fe(II)-[cytochrome c] + O2 + 8 H(+)(in) = 4 Fe(III)-[cytochrome c] + 2 H2O + 4 H(+)(out). Component of the cytochrome c oxidase, the last enzyme in the mitochondrial electron transport chain which drives oxidative phosphorylation. The respiratory chain contains 3 multisubunit complexes succinate dehydrogenase (complex II, CII), ubiquinol-cytochrome c oxidoreductase (cytochrome b-c1 complex, complex III, CIII) and cytochrome c oxidase (complex IV, CIV), that cooperate to transfer electrons derived from NADH and succinate to molecular oxygen, creating an electrochemical gradient over the inner membrane that drives transmembrane transport and the ATP synthase. Cytochrome c oxidase is the component of the respiratory chain that catalyzes the reduction of oxygen to water. Electrons originating from reduced cytochrome c in the intermembrane space (IMS) are transferred via the dinuclear copper A center (CU(A)) of subunit 2 and heme A of subunit 1 to the active site in subunit 1, a binuclear center (BNC) formed by heme A3 and copper B (CU(B)). The BNC reduces molecular oxygen to 2 water molecules using 4 electrons from cytochrome c in the IMS and 4 protons from the mitochondrial matrix. The sequence is that of Cytochrome c oxidase subunit 2 (MT-CO2) from Lycaon pictus (African wild dog).